Here is a 142-residue protein sequence, read N- to C-terminus: Hemoglobin subunit alpha (142 aa).

Residues 2–142 (VLSAADKNNV…VSTVLTSKYR (141 aa)) enclose the Globin domain. A Phosphoserine modification is found at S4. N6-succinyllysine occurs at positions 8 and 12. Position 17 is an N6-acetyllysine; alternate (K17). Residue K17 is modified to N6-succinyllysine; alternate. The residue at position 25 (Y25) is a Phosphotyrosine. At S36 the chain carries Phosphoserine. K41 carries the N6-succinyllysine modification. S50 bears the Phosphoserine mark. H59 is an O2 binding site. Position 88 (H88) interacts with heme b. Position 109 is a phosphothreonine (T109). A phosphoserine mark is found at S125 and S132. Residues T135 and T138 each carry the phosphothreonine modification. S139 is subject to Phosphoserine.

This sequence belongs to the globin family. In terms of assembly, heterotetramer of two alpha chains and two beta chains. In terms of tissue distribution, red blood cells.

In terms of biological role, involved in oxygen transport from the lung to the various peripheral tissues. Its function is as follows. Hemopressin acts as an antagonist peptide of the cannabinoid receptor CNR1. Hemopressin-binding efficiently blocks cannabinoid receptor CNR1 and subsequent signaling. This chain is Hemoglobin subunit alpha (HBA), found in Cavia porcellus (Guinea pig).